The following is a 177-amino-acid chain: Voltage-dependent L-type calcium channel subunit alpha-1C (177 aa).

Residues 27 to 45 (ITFFRLFRVMRLVKLLSRG) form a helical membrane-spanning segment. Residues 64 to 84 (YVALLIVMLFFIYAVIGMQVF) traverse the membrane as a helical segment. Asn90 is a glycosylation site (N-linked (GlcNAc...) asparagine). Residues 107–125 (AVLLLFRCATGEAWQEIML) constitute an intramembrane region (pore-forming). Residues 116–119 (TGEA) carry the Selectivity filter of repeat IV motif. A disulfide bridge connects residues Cys133 and Cys149. A glycan (N-linked (GlcNAc...) asparagine) is linked at Asn141. The helical transmembrane segment at 154-177 (AVFYFISFYMLCAFLIIDLFVAVI) threads the bilayer.

It belongs to the calcium channel alpha-1 subunit (TC 1.A.1.11) family. CACNA1C subfamily. Component of a calcium channel complex consisting of a pore-forming alpha subunit (CACNA1C) and ancillary beta, gamma and delta subunits. The channel complex contains alpha, beta, gamma and delta subunits in a 1:1:1:1 ratio, i.e. it contains only one of each type of subunit. CACNA1C channel activity is modulated by ancillary subunits, such as CACNB2, CACNB3, CACNA2D1 and CACNA2D4. Phosphorylation by PKA activates the channel.

The protein resides in the cell membrane. The protein localises to the perikaryon. It is found in the postsynaptic density membrane. Its subcellular location is the cell projection. It localises to the dendrite. The protein resides in the sarcolemma. The protein localises to the T-tubule. The enzyme catalyses Ca(2+)(in) = Ca(2+)(out). Inhibited by dihydropyridines (DHP), such as isradipine. Channel activity is regulated by Ca(2+) and calmodulin. Functionally, pore-forming, alpha-1C subunit of the voltage-gated calcium channel that gives rise to L-type calcium currents. Mediates influx of calcium ions into the cytoplasm, and thereby triggers calcium release from the sarcoplasm. Plays an important role in excitation-contraction coupling in the heart. Required for normal heart development and normal regulation of heart rhythm. Required for normal contraction of smooth muscle cells in blood vessels and in the intestine. Essential for normal blood pressure regulation via its role in the contraction of arterial smooth muscle cells. Long-lasting (L-type) calcium channels belong to the 'high-voltage activated' (HVA) group. The protein is Voltage-dependent L-type calcium channel subunit alpha-1C (CACNA1C) of Gallus gallus (Chicken).